The chain runs to 95 residues: Aspartyl/glutamyl-tRNA(Asn/Gln) amidotransferase subunit C (95 aa).

Belongs to the GatC family. As to quaternary structure, heterotrimer of A, B and C subunits.

It carries out the reaction L-glutamyl-tRNA(Gln) + L-glutamine + ATP + H2O = L-glutaminyl-tRNA(Gln) + L-glutamate + ADP + phosphate + H(+). It catalyses the reaction L-aspartyl-tRNA(Asn) + L-glutamine + ATP + H2O = L-asparaginyl-tRNA(Asn) + L-glutamate + ADP + phosphate + 2 H(+). Functionally, allows the formation of correctly charged Asn-tRNA(Asn) or Gln-tRNA(Gln) through the transamidation of misacylated Asp-tRNA(Asn) or Glu-tRNA(Gln) in organisms which lack either or both of asparaginyl-tRNA or glutaminyl-tRNA synthetases. The reaction takes place in the presence of glutamine and ATP through an activated phospho-Asp-tRNA(Asn) or phospho-Glu-tRNA(Gln). This is Aspartyl/glutamyl-tRNA(Asn/Gln) amidotransferase subunit C from Pseudomonas paraeruginosa (strain DSM 24068 / PA7) (Pseudomonas aeruginosa (strain PA7)).